Here is a 327-residue protein sequence, read N- to C-terminus: Probable cell division protein WhiA (327 aa).

A DNA-binding region (H-T-H motif) is located at residues 275-308 (SLEELGRLADPPMTKDAVAGRIRRLLSMADRKAK). A disordered region spans residues 304–327 (DRKAKQDGIPDTESAVTPDLLEDA).

It belongs to the WhiA family.

Functionally, involved in cell division and chromosome segregation. The chain is Probable cell division protein WhiA from Mycobacterium sp. (strain MCS).